A 503-amino-acid chain; its full sequence is Maturase K (503 aa).

The protein belongs to the intron maturase 2 family. MatK subfamily.

Its subcellular location is the plastid. The protein resides in the chloroplast. Usually encoded in the trnK tRNA gene intron. Probably assists in splicing its own and other chloroplast group II introns. The protein is Maturase K of Rosa foetida (Austrian briar).